The following is a 190-amino-acid chain: Venom nerve growth factor (190 aa).

The signal sequence occupies residues 1–7; sequence FLIGIWA. The propeptide occupies 8-111; sequence APKSEDNVPL…SLNRNIRAKR (104 aa). A disulfide bond links C125 and C190. N134 is a glycosylation site (N-linked (GlcNAc...) asparagine).

The protein belongs to the NGF-beta family. Homodimer; non-covalently linked. Glycosylated. In terms of tissue distribution, expressed by the venom gland.

It localises to the secreted. In terms of biological role, nerve growth factor is important for the development and maintenance of the sympathetic and sensory nervous systems. It stimulates division and differentiation of sympathetic and embryonic sensory neurons as well as basal forebrain cholinergic neurons in the brain. Its relevance in the snake venom is not clear. However, it has been shown to inhibit metalloproteinase-dependent proteolysis of platelet glycoprotein Ib alpha, suggesting a metalloproteinase inhibition to prevent metalloprotease autodigestion and/or protection against prey proteases. Binds a lipid between the two protein chains in the homodimer. The lipid-bound form promotes histamine relase from mouse mast cells, contrary to the lipid-free form. This is Venom nerve growth factor from Agkistrodon contortrix contortrix (Southern copperhead).